The primary structure comprises 214 residues: Probable nicotinate-nucleotide adenylyltransferase (214 aa).

It belongs to the NadD family.

The enzyme catalyses nicotinate beta-D-ribonucleotide + ATP + H(+) = deamido-NAD(+) + diphosphate. It participates in cofactor biosynthesis; NAD(+) biosynthesis; deamido-NAD(+) from nicotinate D-ribonucleotide: step 1/1. Catalyzes the reversible adenylation of nicotinate mononucleotide (NaMN) to nicotinic acid adenine dinucleotide (NaAD). The sequence is that of Probable nicotinate-nucleotide adenylyltransferase from Pseudomonas aeruginosa (strain UCBPP-PA14).